A 140-amino-acid chain; its full sequence is UPF0306 protein YhbP (140 aa).

This sequence belongs to the UPF0306 family.

The polypeptide is UPF0306 protein YhbP (Escherichia coli O6:H1 (strain CFT073 / ATCC 700928 / UPEC)).